The chain runs to 588 residues: Zeta-carotene desaturase, chloroplastic/chromoplastic (588 aa).

Belongs to the zeta carotene desaturase family. NAD(+) is required as a cofactor. NADP(+) serves as cofactor. It depends on FAD as a cofactor.

It localises to the plastid. The protein resides in the chloroplast. The protein localises to the chromoplast. It carries out the reaction 9,9'-di-cis-zeta-carotene + 2 a quinone = 7,7',9,9'-tetra-cis-lycopene + 2 a quinol. It participates in carotenoid biosynthesis; lycopene biosynthesis. Catalyzes the conversion of zeta-carotene to lycopene via the intermediary of neurosporene. It carries out two consecutive desaturations (introduction of double bonds) at positions C-7 and C-7'. In Solanum lycopersicum (Tomato), this protein is Zeta-carotene desaturase, chloroplastic/chromoplastic (ZDS).